A 426-amino-acid polypeptide reads, in one-letter code: Endothelin-1 receptor (426 aa).

An N-terminal signal peptide occupies residues 1 to 20 (MGVLCFLASFWLALVGGAIA). Residues 21–80 (DNAERYSANLSSHVEDFTPFPGTEFNFLGTTLQPPNLALPSNGSMHGYCPQQTKITTAFK) lie on the Extracellular side of the membrane. 2 N-linked (GlcNAc...) asparagine glycosylation sites follow: asparagine 29 and asparagine 62. Residues 81–102 (YINTVISCTIFIVGMVGNATLL) traverse the membrane as a helical segment. Topologically, residues 103–112 (RIIYQNKCMR) are cytoplasmic. Residues 113-132 (NGPNALIASLALGDLIYVVI) traverse the membrane as a helical segment. At 133–159 (DLPINVFKLLAGRWPFDHNDFGVFLCK) the chain is on the extracellular side. Cysteines 158 and 239 form a disulfide. The chain crosses the membrane as a helical span at residues 160–181 (LFPFLQKSSVGITVLNLCALSV). Over 182–205 (DRYRAVASWSRVQGIGIPLITAIE) the chain is Cytoplasmic. Residues 206–229 (IVSIWILSFILAIPEAIGFVMVPF) form a helical membrane-spanning segment. Topologically, residues 230-256 (EYKGEQHRTCMLNATTKFMEFYQDVKD) are extracellular. Residues 257–278 (WWLFGFYFCMPLVCTAIFYTLM) traverse the membrane as a helical segment. Residues 279–306 (TCEMLNRRNGSLRIALSEHLKQRREVAK) are Cytoplasmic-facing. Residues 307–328 (TVFCLVVIFALCWFPLHLSRIL) form a helical membrane-spanning segment. Topologically, residues 329–347 (KKTVYDEMDKNRCELLSFL) are extracellular. The helical transmembrane segment at 348 to 372 (LLMDYIGINLATMNSCINPIALYFV) threads the bilayer. The Cytoplasmic portion of the chain corresponds to 373–426 (SKKFKNCFQSCLCCCCHQSKSLMTSVPMNGTSIQWKNQEQNHNTERSSHKDSMN). Residue serine 424 is modified to Phosphoserine.

It belongs to the G-protein coupled receptor 1 family. Endothelin receptor subfamily. EDNRA sub-subfamily. As to quaternary structure, interacts with HDAC7 and KAT5. In terms of tissue distribution, predominantly expressed in vascular smooth muscle cells of a variety of issues, bronchial smooth muscle cells, myocardium, and the pituitary gland.

Its subcellular location is the cell membrane. In terms of biological role, receptor for endothelin-1. Mediates its action by association with G proteins that activate a phosphatidylinositol-calcium second messenger system. The rank order of binding affinities for ET-A is: ET1 &gt; ET2 &gt;&gt; ET3. The polypeptide is Endothelin-1 receptor (Rattus norvegicus (Rat)).